Consider the following 365-residue polypeptide: Neuronal migration protein doublecortin (365 aa).

A Phosphoserine; by CDK5 modification is found at serine 28. A Phosphoserine; by MARK1 and PKA modification is found at serine 47. Doublecortin domains lie at 53–139 (KKVR…VEYT) and 180–263 (KLVT…AQDD). The residue at position 70 (tyrosine 70) is a Phosphotyrosine; by ABL. Phosphoserine; by PKC is present on serine 74. Phosphoserine; by CK2 is present on serine 90. Residue serine 110 is modified to Phosphoserine; by PKC. Position 115 is a phosphoserine; by CK2, MARK1 and PKA (serine 115). Serine 265 carries the phosphoserine; by CK2 modification. The segment at 275–365 (KGNPSATAGP…DDSDSLGDSM (91 aa)) is disordered. At serine 287 the chain carries Phosphoserine; by CDK5. Threonine 289 carries the post-translational modification Phosphothreonine; by CDK5. Serine 294 is modified (phosphoserine; by PKC). At serine 297 the chain carries Phosphoserine; by CDK5. Serine 306 is modified (phosphoserine; by CK2). Position 306 is a phosphoserine; by DYRK2 (serine 306). The segment covering 307–341 (PADSGNDQDANGTSSSQLSTPKSKQSPISTPTSPG) has biased composition (polar residues). Threonine 326 carries the phosphothreonine; by CDK5 modification. Threonine 326 carries the phosphothreonine; by PKC and MAPK modification. The residue at position 332 (serine 332) is a Phosphoserine; by CDK5. At serine 332 the chain carries Phosphoserine; by MAPK. Threonine 336 is modified (phosphothreonine; by MAPK). Serine 339 is modified (phosphoserine; by CDK5). The residue at position 339 (serine 339) is a Phosphoserine; by MAPK. Serine 342 bears the Phosphoserine; by PKC mark. Serine 354 and serine 360 each carry phosphoserine; by CK2. The segment covering 356-365 (DDSDSLGDSM) has biased composition (acidic residues).

Interacts with tubulin. Interacts with USP9X. Phosphorylation by MARK1, MARK2 and PKA regulates its ability to bind microtubules. Phosphorylation at Ser-265 and Ser-297 seems to occur only in neonatal brain, the levels falling precipitously by postnatal day 21. In terms of processing, ubiquitinated by MDM2, leading to its degradation by the proteasome. Ubiquitinated by MDM2 and subsequent degradation leads to reduce the dendritic spine density of olfactory bulb granule cells.

It is found in the cytoplasm. Its subcellular location is the cell projection. It localises to the neuron projection. Functionally, microtubule-associated protein required for initial steps of neuronal dispersion and cortex lamination during cerebral cortex development. May act by competing with the putative neuronal protein kinase DCLK1 in binding to a target protein. May in that way participate in a signaling pathway that is crucial for neuronal interaction before and during migration, possibly as part of a calcium ion-dependent signal transduction pathway. May participate along with PAFAH1B1/LIS-1 in a distinct overlapping signaling pathway that promotes neuronal migration. The protein is Neuronal migration protein doublecortin (Dcx) of Rattus norvegicus (Rat).